Here is a 263-residue protein sequence, read N- to C-terminus: Hydroxyethylthiazole kinase (263 aa).

Residue Met-41 coordinates substrate. Arg-117 and Thr-163 together coordinate ATP. Gly-190 serves as a coordination point for substrate.

Belongs to the Thz kinase family. Mg(2+) serves as cofactor.

The catalysed reaction is 5-(2-hydroxyethyl)-4-methylthiazole + ATP = 4-methyl-5-(2-phosphooxyethyl)-thiazole + ADP + H(+). Its pathway is cofactor biosynthesis; thiamine diphosphate biosynthesis; 4-methyl-5-(2-phosphoethyl)-thiazole from 5-(2-hydroxyethyl)-4-methylthiazole: step 1/1. Functionally, catalyzes the phosphorylation of the hydroxyl group of 4-methyl-5-beta-hydroxyethylthiazole (THZ). In Exiguobacterium sp. (strain ATCC BAA-1283 / AT1b), this protein is Hydroxyethylthiazole kinase.